The following is a 255-amino-acid chain: MVPWLGPDDPFPSVERALGAASGAPGLLAASADLLPSRLIDAYRRGIFPWYSDGQPVLWWSPDPRMILVPAEFRISATFRKTLKRVLREPRWEIRVDCDFAGVMRACAQAPRRGQRGTWITAEIIDAYSSLHRAGDAHSIETWLDGRRVGGLYGVSFGGMFFGESMYADVSDASKIALAALVAHLREHRVVMIDCQQNTSHLASLGGREIARKAFVAHVRRAVAEPPISWRFDKTVVAGLLGQAASATAADAFDR.

This sequence belongs to the L/F-transferase family.

The protein localises to the cytoplasm. The catalysed reaction is N-terminal L-lysyl-[protein] + L-leucyl-tRNA(Leu) = N-terminal L-leucyl-L-lysyl-[protein] + tRNA(Leu) + H(+). The enzyme catalyses N-terminal L-arginyl-[protein] + L-leucyl-tRNA(Leu) = N-terminal L-leucyl-L-arginyl-[protein] + tRNA(Leu) + H(+). It catalyses the reaction L-phenylalanyl-tRNA(Phe) + an N-terminal L-alpha-aminoacyl-[protein] = an N-terminal L-phenylalanyl-L-alpha-aminoacyl-[protein] + tRNA(Phe). In terms of biological role, functions in the N-end rule pathway of protein degradation where it conjugates Leu, Phe and, less efficiently, Met from aminoacyl-tRNAs to the N-termini of proteins containing an N-terminal arginine or lysine. This Burkholderia thailandensis (strain ATCC 700388 / DSM 13276 / CCUG 48851 / CIP 106301 / E264) protein is Leucyl/phenylalanyl-tRNA--protein transferase.